A 186-amino-acid chain; its full sequence is Tumor necrosis factor, alpha-induced protein 8-like protein 2 B (186 aa).

The protein belongs to the TNFAIP8 family. TNFAIP8L2 subfamily.

Acts as a negative regulator of innate and adaptive immunity by maintaining immune homeostasis. Negative regulator of Toll-like receptor and T-cell receptor function. Prevents hyperresponsiveness of the immune system and maintains immune homeostasis. Inhibits jun/ap1 and NF-kappa-B activation. Promotes Fas-induced apoptosis. This is Tumor necrosis factor, alpha-induced protein 8-like protein 2 B (tnfaip8l2b) from Danio rerio (Zebrafish).